The primary structure comprises 128 residues: Small ribosomal subunit protein uS13 (128 aa).

Residues 97-128 are disordered; it reads PVRGQRTRSNARTRKGPRPSRIKTKKKKEQTV. The segment covering 101-128 has biased composition (basic residues); sequence QRTRSNARTRKGPRPSRIKTKKKKEQTV.

It belongs to the universal ribosomal protein uS13 family. Part of the 30S ribosomal subunit. Forms a loose heterodimer with protein S19. Forms two bridges to the 50S subunit in the 70S ribosome.

In terms of biological role, located at the top of the head of the 30S subunit, it contacts several helices of the 16S rRNA. In the 70S ribosome it contacts the 23S rRNA (bridge B1a) and protein L5 of the 50S subunit (bridge B1b), connecting the 2 subunits; these bridges are implicated in subunit movement. Contacts the tRNAs in the A and P-sites. In Pseudothermotoga lettingae (strain ATCC BAA-301 / DSM 14385 / NBRC 107922 / TMO) (Thermotoga lettingae), this protein is Small ribosomal subunit protein uS13.